The sequence spans 761 residues: Translational repressor ifet-1 (761 aa).

5 disordered regions span residues 101–274 (SPQR…SSGG), 386–446 (KGME…QHLH), 557–592 (VQRQ…AHNQ), 681–702 (QQAQ…QQHQ), and 730–761 (GSQF…AVPK). 3 stretches are compositionally biased toward basic and acidic residues: residues 114–128 (PTDD…ERLG), 164–189 (RGTR…EERL), and 212–222 (IELRGFDEPKK). 4 stretches are compositionally biased toward polar residues: residues 400–410 (QDPSQQAQLLQ), 557–568 (VQRQLQKSSSNA), 576–592 (SQSP…AHNQ), and 690–702 (ERQG…QQHQ).

As to quaternary structure, interacts with cgh-1. Interacts with ife-1 and oma-1. In terms of tissue distribution, in the embryo, significantly enriched in the germ cell lineage.

It localises to the cytoplasm. Involved in translational repression of multiple mRNAs in the distal gonad. Recruited to the 3' untranslated region (UTR) of zif-1 by oma-1 and is required for translational repression of zif-1. May also be involved in translational repression of mei-1 through recruitment to the mei-1 3' UTR by oma-1. Required for oogenesis but not spermatogenesis, for P granule formation and for the localization of car-1 and cgh-1 to P granules. Required for normal spindle orientation in early embryos. The chain is Translational repressor ifet-1 from Caenorhabditis elegans.